The following is a 421-amino-acid chain: MEF2-activating motif and SAP domain-containing transcriptional regulator (421 aa).

An MEF2-binding motif is present at residues 12-28; the sequence is IIRSKFRSVLQLRIHRR. Disordered stretches follow at residues 104–156, 188–296, and 322–406; these read PPEQ…PPSH, KAML…ASLT, and DQVE…ADLS. The region spanning 165–199 is the SAP domain; sequence LEELTVSELRQQLRLRGLPVSGTKAMLLERMRGGT. Positions 191–214 are enriched in basic and acidic residues; it reads LLERMRGGTPPRERPKPRREDKEA. The transcription activation stretch occupies residues 208 to 421; the sequence is RREDKEAAAP…LLWELLPDPW (214 aa). Polar residues predominate over residues 230-241; the sequence is RLPSTVKASATN. A compositionally biased stretch (pro residues) spans 260–292; that stretch reads ASVPAPTPSPALAPTPTPAPVPAPAPAPFPTPP. The span at 347 to 372 shows a compositional bias: low complexity; the sequence is SPDSEGFSSVFSSSLPSPTSSLSPSP.

In terms of assembly, interacts with MEF2C. Expressed in skeletal muscle, brain, placenta and spleen.

It is found in the nucleus. Its function is as follows. Transcriptional coactivator. Stimulates the transcriptional activity of MEF2C. Stimulates MYOD1 activity in part via MEF2, resulting in an enhancement of skeletal muscle differentiation. The polypeptide is MEF2-activating motif and SAP domain-containing transcriptional regulator (Mamstr) (Mus musculus (Mouse)).